The primary structure comprises 372 residues: MTQAKDHAMNIGVFIPIGNNGWLLSENAPQYMPSFDLNKQITLKAEQHGLDFVLSMIKLRGFGGKTEFWDHNLESFTLMAGLAAVTSRIKLYATAPTLCLPPAIVARMASTIDSISNGRFGLNLVTGWQRPEYAQMGLWPGDEYFGRRYEYLSEYAQVLRELWETGRSDLKGEFFQMEDCRLSPRPQAEMKIICAGQSAAGMAFTATYADYNFCFGKGVNTPTAFAPTVERLEEAKAKTGRDVSSYVLFMVISDETDEAARAKWEHYKAGADAEAIAWLGLQGAADTKSGADTNIRQMADPTSAVNINMGTLVGSHATVAALLDEVVTVPGTGGVLLVFDDFLKGLDDFGTKIQPLMRSRRHVTGEALAEVA.

Residues 57-58 (IK), Asn123, Glu132, 148-149 (RY), and Ser198 each bind FMN.

This sequence belongs to the NtaA/SnaA/DszA monooxygenase family. RutA subfamily.

It carries out the reaction uracil + FMNH2 + NADH + O2 = (Z)-3-ureidoacrylate + FMN + NAD(+) + H2O + H(+). The enzyme catalyses thymine + FMNH2 + NADH + O2 = (Z)-2-methylureidoacrylate + FMN + NAD(+) + H2O + H(+). Catalyzes the pyrimidine ring opening between N-3 and C-4 by an unusual flavin hydroperoxide-catalyzed mechanism, adding oxygen atoms in the process to yield ureidoacrylate peracid, that immediately reacts with FMN forming ureidoacrylate and FMN-N(5)-oxide. The FMN-N(5)-oxide reacts spontaneously with NADH to produce FMN. Requires the flavin reductase RutF to regenerate FMN in vivo. The chain is Pyrimidine monooxygenase RutA from Methylorubrum extorquens (strain PA1) (Methylobacterium extorquens).